A 205-amino-acid chain; its full sequence is Guanylate kinase (205 aa).

The Guanylate kinase-like domain occupies 5 to 183; it reads GTLYTVSAPS…ALTEFRSIVV (179 aa). 12 to 19 serves as a coordination point for ATP; that stretch reads APSGAGKT.

The protein belongs to the guanylate kinase family.

The protein localises to the cytoplasm. It catalyses the reaction GMP + ATP = GDP + ADP. Functionally, essential for recycling GMP and indirectly, cGMP. This Saccharophagus degradans (strain 2-40 / ATCC 43961 / DSM 17024) protein is Guanylate kinase.